Consider the following 1225-residue polypeptide: Catenin delta-2 (1225 aa).

Disordered regions lie at residues 1–51, 87–117, 134–242, and 256–312; these read MFAR…TSAI, SETGSMSSMSSAEEQFQWQSQDGQKDIEDEL, SGIL…HLPD, and SSTL…KSYS. Composition is skewed to polar residues over residues 20 to 51 and 98 to 108; these read QPSSASEKTSSLSPGLNTSNGDGSETETTSAI and AEEQFQWQSQD. Positions 49-84 form a coiled coil; it reads SAILASVKEQELQFERLTRELEAERQIVASQLERCK. Residues 149-160 are compositionally biased toward low complexity; the sequence is SLLSQSALQLNS. Composition is skewed to polar residues over residues 172–187 and 195–209; these read YHSNQTLALGETTPSQ and ARATGQSFSQGTTSR. Arg-209 bears the Omega-N-methylarginine mark. Residues 217–229 show a composition bias toward pro residues; it reads EPAPPPPPPPREP. Arg-264 carries the omega-N-methylarginine modification. Ser-267 and Ser-276 each carry phosphoserine. An omega-N-methylarginine mark is found at Arg-282 and Arg-296. Residues 299-312 are compositionally biased toward polar residues; it reads SPKQSPSRLAKSYS. Phosphoserine is present on residues Ser-327, Ser-360, Ser-415, and Ser-461. The ARM 1 repeat unit spans residues 394–438; that stretch reads GSRASYSSQHGHLGPELRALQSPEHHIDPIYEDRVYQKPPMRSLS. 2 disordered regions span residues 432-483 and 514-542; these read PPMR…NAAA and SPYSKSGPALPPEGTLARSPSIDSIQKDP. The segment covering 469 to 478 has biased composition (polar residues); sequence LQRTGSQHGP. At Ser-514 the chain carries Phosphoserine. The residue at position 516 (Tyr-516) is a Phosphotyrosine. 8 ARM repeats span residues 540–579, 582–621, 626–666, 682–724, 728–773, 835–875, 882–921, and 975–1018; these read KDPREFGWRDPELPEVIQMLQHQFPSVQSNAAAYLQHLCF, NKIKAEIRRQGGIQLLVDLLDHRMTEVHRSACGALRNLVY, DDNK…NLSS, LTNA…NVSS, EARR…NLSY, PKGI…NLAA, VYIRAAVRKEKGLPILVELLRIDNDRVVCAVATALRNMAL, and MENA…SMWQ. Residues 1042 to 1077 form a disordered region; it reads TIERDRQRPYSSSRTPSISPVRVSPNNRSASAPASP. A compositionally biased stretch (polar residues) spans 1050-1059; the sequence is PYSSSRTPSI. 2 positions are modified to phosphoserine: Ser-1065 and Ser-1076. Positions 1065–1077 are enriched in low complexity; that stretch reads SPNNRSASAPASP.

Belongs to the beta-catenin family. Binds to E-cadherin at a juxtamembrane site within the cytoplasmic domain. Interacts with PDZD2. Interacts with ZBTB33. Binds to PSEN1. Interacts with ARHGEF28. Interacts (via the extreme C-terminus) with FRMPD2 (via the PDZ 2 domain). Interacts with CDK5. Interacts with CTNNB1. Interacts with GSK3A and GSK3B. Interacts with DNM2. Interacts with CCDC85B. Post-translationally, O-glycosylated. In terms of processing, phosphorylated by CDK5. Phosphorylated by GSK3B. In terms of tissue distribution, expressed in brain; highest expression is observed in fetal brain.

The protein localises to the nucleus. It is found in the cell junction. It localises to the adherens junction. The protein resides in the cell projection. Its subcellular location is the dendrite. The protein localises to the perikaryon. Functionally, has a critical role in neuronal development, particularly in the formation and/or maintenance of dendritic spines and synapses. Involved in the regulation of Wnt signaling. It probably acts on beta-catenin turnover, facilitating beta-catenin interaction with GSK3B, phosphorylation, ubiquitination and degradation. Functions as a transcriptional activator when bound to ZBTB33. May be involved in neuronal cell adhesion and tissue morphogenesis and integrity by regulating adhesion molecules. In Homo sapiens (Human), this protein is Catenin delta-2 (CTNND2).